The chain runs to 479 residues: Poly(A) polymerase catalytic subunit (479 aa).

Active-site residues include Asp-202 and Asp-204. Residues Asp-202, Asp-204, and Asp-253 each contribute to the Ca(2+) site.

This sequence belongs to the poxviridae poly(A) polymerase catalytic subunit family. As to quaternary structure, heterodimer of a large (catalytic) subunit and a small (regulatory) subunit.

It catalyses the reaction RNA(n) + ATP = RNA(n)-3'-adenine ribonucleotide + diphosphate. In terms of biological role, polymerase that creates the 3'-poly(A) tail of mRNA's. The sequence is that of Poly(A) polymerase catalytic subunit (OPG063) from Bos taurus (Bovine).